We begin with the raw amino-acid sequence, 247 residues long: uncharacterized protein (247 aa).

2 helical membrane passes run 9-29 (IIAI…FLIF) and 37-57 (SYFL…SLII).

The protein localises to the cell membrane. This is an uncharacterized protein from Methanocaldococcus jannaschii (strain ATCC 43067 / DSM 2661 / JAL-1 / JCM 10045 / NBRC 100440) (Methanococcus jannaschii).